We begin with the raw amino-acid sequence, 60 residues long: Large ribosomal subunit protein uL30 (60 aa).

It belongs to the universal ribosomal protein uL30 family. In terms of assembly, part of the 50S ribosomal subunit.

The protein is Large ribosomal subunit protein uL30 of Lactiplantibacillus plantarum (strain ATCC BAA-793 / NCIMB 8826 / WCFS1) (Lactobacillus plantarum).